Consider the following 91-residue polypeptide: UPF0358 protein SERP0701 (91 aa).

This sequence belongs to the UPF0358 family.

The polypeptide is UPF0358 protein SERP0701 (Staphylococcus epidermidis (strain ATCC 35984 / DSM 28319 / BCRC 17069 / CCUG 31568 / BM 3577 / RP62A)).